Consider the following 188-residue polypeptide: MSNALASAPLDAADYIKSHIRTVPDWPQPGVQFRDITPLLQEPKSLRVLIDLFVQRYIDAKLDYIAGLDARGFIIGPILAYELNLGFIPIRKAGKLPYKRVAQSYELEYGTATVEIHEDACKPGDRIVIIDDLIATGGTMMAGKILLERLGAVVVEGAAIIDLPELGGSKLLREGGLALYTVTGFDGH.

The protein belongs to the purine/pyrimidine phosphoribosyltransferase family. In terms of assembly, homodimer.

It is found in the cytoplasm. The catalysed reaction is AMP + diphosphate = 5-phospho-alpha-D-ribose 1-diphosphate + adenine. It functions in the pathway purine metabolism; AMP biosynthesis via salvage pathway; AMP from adenine: step 1/1. Its function is as follows. Catalyzes a salvage reaction resulting in the formation of AMP, that is energically less costly than de novo synthesis. This chain is Adenine phosphoribosyltransferase, found in Paraburkholderia phytofirmans (strain DSM 17436 / LMG 22146 / PsJN) (Burkholderia phytofirmans).